We begin with the raw amino-acid sequence, 214 residues long: Small ribosomal subunit protein uS5 (214 aa).

An S5 DRBM domain is found at 54–117 (MKYEVIDIGM…RDAKMHVIPV (64 aa)).

The protein belongs to the universal ribosomal protein uS5 family. Part of the 30S ribosomal subunit. Contacts protein S4.

In terms of biological role, with S4 and S12 plays an important role in translational accuracy. The sequence is that of Small ribosomal subunit protein uS5 from Metallosphaera sedula (strain ATCC 51363 / DSM 5348 / JCM 9185 / NBRC 15509 / TH2).